The primary structure comprises 320 residues: 4-diphosphocytidyl-2-C-methyl-D-erythritol kinase (320 aa).

Residue Lys-20 is part of the active site. ATP is bound at residue Pro-112–Ala-122. Asp-154 is an active-site residue.

The protein belongs to the GHMP kinase family. IspE subfamily.

It catalyses the reaction 4-CDP-2-C-methyl-D-erythritol + ATP = 4-CDP-2-C-methyl-D-erythritol 2-phosphate + ADP + H(+). The protein operates within isoprenoid biosynthesis; isopentenyl diphosphate biosynthesis via DXP pathway; isopentenyl diphosphate from 1-deoxy-D-xylulose 5-phosphate: step 3/6. Functionally, catalyzes the phosphorylation of the position 2 hydroxy group of 4-diphosphocytidyl-2C-methyl-D-erythritol. This is 4-diphosphocytidyl-2-C-methyl-D-erythritol kinase from Pseudarthrobacter chlorophenolicus (strain ATCC 700700 / DSM 12829 / CIP 107037 / JCM 12360 / KCTC 9906 / NCIMB 13794 / A6) (Arthrobacter chlorophenolicus).